Consider the following 327-residue polypeptide: Flap endonuclease 1 (327 aa).

The interval 1-98 is N-domain; sequence MGVKLKDIIQ…ETIDQRRQTR (98 aa). The Mg(2+) site is built by D27, D80, E152, E154, D173, D175, and D226. An I-domain region spans residues 116–246; that stretch reads EARKYAMRSS…KTALKLAKKG (131 aa). The interval 319–327 is interaction with PCNA; it reads SQKSLEDWF.

It belongs to the XPG/RAD2 endonuclease family. FEN1 subfamily. As to quaternary structure, interacts with PCNA. PCNA stimulates the nuclease activity without altering cleavage specificity. Mg(2+) is required as a cofactor.

Functionally, structure-specific nuclease with 5'-flap endonuclease and 5'-3' exonuclease activities involved in DNA replication and repair. During DNA replication, cleaves the 5'-overhanging flap structure that is generated by displacement synthesis when DNA polymerase encounters the 5'-end of a downstream Okazaki fragment. Binds the unpaired 3'-DNA end and kinks the DNA to facilitate 5' cleavage specificity. Cleaves one nucleotide into the double-stranded DNA from the junction in flap DNA, leaving a nick for ligation. Also involved in the base excision repair (BER) pathway. Acts as a genome stabilization factor that prevents flaps from equilibrating into structures that lead to duplications and deletions. Also possesses 5'-3' exonuclease activity on nicked or gapped double-stranded DNA. The chain is Flap endonuclease 1 from Methanobrevibacter smithii (strain ATCC 35061 / DSM 861 / OCM 144 / PS).